The chain runs to 221 residues: Thiol:disulfide interchange protein TlpA (221 aa).

The Cytoplasmic portion of the chain corresponds to 1–11 (MLDTKPSATRR). The chain crosses the membrane as a helical span at residues 12-35 (IPLVIATVAVGGLAGFAALYGLGL). Residues 36–221 (SRAPTGDPAC…AATGKAAAAL (186 aa)) lie on the Periplasmic side of the membrane. Cystine bridges form between C45–C190 and C107–C110. Residues 69 to 215 (ASAPLKLPDL…ALKLIRAATG (147 aa)) enclose the Thioredoxin domain.

The protein belongs to the thioredoxin family. In terms of assembly, monomer.

It is found in the cell membrane. In terms of biological role, involved in cytochrome aa3 assembly. This is Thiol:disulfide interchange protein TlpA (tlpA) from Bradyrhizobium diazoefficiens (strain JCM 10833 / BCRC 13528 / IAM 13628 / NBRC 14792 / USDA 110).